The primary structure comprises 588 residues: Mitochondrial tRNA methylthiotransferase CDK5RAP1 (588 aa).

The transit peptide at 1 to 30 directs the protein to the mitochondrion; that stretch reads MHPLRCVLQVQRLSAPFTSMCWVLLRTCRA. Disordered stretches follow at residues 33–53 and 70–91; these read SVSSTPCPSPEAKSSEAQKDF and ASVPQEKPSSPEVEDPPPYLSG. The MTTase N-terminal domain occupies 99–219; that stretch reads RKVYLETYGC…LPRLLAVVES (121 aa). Residues cysteine 108, cysteine 144, cysteine 182, cysteine 257, cysteine 261, and cysteine 264 each contribute to the [4Fe-4S] cluster site. A Radical SAM core domain is found at 243 to 498; it reads SPSATSAFVS…TVFREEASKA (256 aa). The TRAM domain maps to 500-575; it reads KTSVGCSQLV…SQTLKGHILC (76 aa).

This sequence belongs to the methylthiotransferase family. MiaB subfamily. As to quaternary structure, interacts with CDK5R1 (p35 form). CDK5RAP1, CDK5RAP2 and CDK5RAP3 show competitive binding to CDK5R1. Probably forms a complex with CDK5R1 and CDK5. [4Fe-4S] cluster serves as cofactor. Expressed in brain, liver, skeletal muscle and heart.

It is found in the mitochondrion. The enzyme catalyses N(6)-dimethylallyladenosine(37) in tRNA + (sulfur carrier)-SH + AH2 + 2 S-adenosyl-L-methionine = 2-methylsulfanyl-N(6)-dimethylallyladenosine(37) in tRNA + (sulfur carrier)-H + 5'-deoxyadenosine + L-methionine + A + S-adenosyl-L-homocysteine + 2 H(+). In terms of biological role, methylthiotransferase that catalyzes the conversion of N6-(dimethylallyl)adenosine (i(6)A) to 2-methylthio-N6-(dimethylallyl)adenosine (ms(2)i(6)A) at position 37 (adjacent to the 3'-end of the anticodon) of four mitochondrial DNA-encoded tRNAs (Ser(UCN), Phe, Tyr and Trp). Essential for efficient and highly accurate protein translation by the ribosome. Specifically inhibits CDK5 activation by CDK5R1. Essential for efficient mitochondrial protein synthesis and respiratory chain. The polypeptide is Mitochondrial tRNA methylthiotransferase CDK5RAP1 (Mus musculus (Mouse)).